A 255-amino-acid polypeptide reads, in one-letter code: DNA repair protein RecO (255 aa).

Belongs to the RecO family.

Involved in DNA repair and RecF pathway recombination. This chain is DNA repair protein RecO, found in Listeria monocytogenes serotype 4a (strain HCC23).